A 469-amino-acid polypeptide reads, in one-letter code: Peripherin (469 aa).

2 stretches are compositionally biased toward low complexity: residues 1 to 18 (MSHPSGLRSSVSSTSYRR) and 27 to 53 (SPGAFSYSSSSRFSSSRLLGSASPGSS). Positions 1 to 60 (MSHPSGLRSSVSSTSYRRTFGPPPSLSPGAFSYSSSSRFSSSRLLGSASPGSSVRLGSFR) are disordered. The head stretch occupies residues 1-98 (MSHPSGLRSS…FLATRSNEKQ (98 aa)). Tyr16 is subject to 3'-nitrotyrosine. Phosphoserine is present on residues Ser27, Ser49, and Ser58. The IF rod domain maps to 96–406 (EKQELQELND…KLLEGEESRI (311 aa)). The coil 1A stretch occupies residues 99 to 131 (ELQELNDRFANFIEKVRFLEQQNAALRGELNQA). The tract at residues 132–142 (RGQEPARADQL) is linker 1. The coil 1B stretch occupies residues 143–238 (CQQELRELRR…KLHEEELRDL (96 aa)). The interval 239-261 (QLSVESQQVQHVEVEATVKPELT) is linker 2. The segment at 262 to 404 (AALRDIRAQY…YRKLLEGEES (143 aa)) is coil 2. Position 378 is a 3'-nitrotyrosine (Tyr378). Residues 405–469 (RISVPVHSFA…SELDKSPQSY (65 aa)) form a tail region. The tract at residues 447-469 (GEQVVTESQKEQHSELDKSPQSY) is disordered. Residue Tyr469 is modified to Phosphotyrosine.

Belongs to the intermediate filament family. Forms homodimers (in vitro). Homopolymerizes into a filamentous network (in vitro). Forms heterodimers with NEFL, NEFM or NEFH (in vitro). Interacts with DST (via C-terminus). Interacts with RAB7A; the interaction is direct. Interacts with PRKCE (via phorbol-ester/DAG-type 2 domain). Phosphorylated; phosphorylation increases after nerve injury in regenerating neurons.

The protein localises to the cytoplasm. It is found in the cytoskeleton. The protein resides in the cell projection. It localises to the axon. Its subcellular location is the perikaryon. In terms of biological role, class-III neuronal intermediate filament protein. May form an independent structural network without the involvement of other neurofilaments or may cooperate with the neuronal intermediate filament proteins NEFL, NEFH, NEFM and INA to form a filamentous network. Assembly of the neuronal intermediate filaments may be regulated by RAB7A. Plays a role in the development of unmyelinated sensory neurons. May be involved in axon elongation and axon regeneration after injury. Inhibits neurite extension in type II spiral ganglion neurons in the cochlea. This is Peripherin (PRPH) from Bos taurus (Bovine).